Consider the following 1229-residue polypeptide: Pesticidal crystal protein Cry1Bb (1229 aa).

The protein belongs to the delta endotoxin family.

In terms of biological role, promotes colloidosmotic lysis by binding to the midgut epithelial cells of many lepidopteran larvae. The sequence is that of Pesticidal crystal protein Cry1Bb (cry1Bb) from Bacillus thuringiensis.